The primary structure comprises 744 residues: Cell division cycle protein 27 homolog B (744 aa).

Residues 101 to 134 (AAGHYLLGLIYKYTDRRKNAAQQFKQSLTIDPLL) form a TPR 1 repeat. A compositionally biased stretch (polar residues) spans 180–199 (NEERNSTSTKNTSSEDYSPR). Disordered stretches follow at residues 180 to 218 (NEER…NFHS) and 359 to 390 (ENMD…NDQE). Basic and acidic residues predominate over residues 363-374 (EGVRGEPFDDSR). The span at 375 to 387 (PNTASTTGSMASN) shows a compositional bias: polar residues. TPR repeat units lie at residues 450–483 (GWVL…SPYC), 518–551 (PQSW…NPRF), 553–585 (YAHT…DTRH), 587–619 (NAWY…NPSS), 621–653 (VIMS…DRKN), 655–687 (LPMY…APSE), and 688–721 (SSVY…KPPA).

The protein belongs to the APC3/CDC27 family. The APC/C is composed of at least 10 subunits. Can homodimerize. Interacts with APC2, APC10, FZR2 and FZR3. Interacts with PANS1. Interacts with SAMBA. As to expression, specifically expressed in dividing and elongating cells.

It localises to the nucleus. Its pathway is protein modification; protein ubiquitination. Functionally, component of the anaphase promoting complex/cyclosome (APC/C), a cell cycle-regulated E3 ubiquitin-protein ligase complex that controls progression through mitosis and the G1 phase of the cell cycle. The APC/C complex controls several key steps in the cell cycle by mediating ubiquitination and subsequent degradation of target proteins such as cyclins. The APC/C complex is required for the female gametophyte development and is involved in several aspect of development by controlling cell division and cell elongation. Involved in the control of endoreduplication. Functionally redundant with CDC27A in the control of gametophyte development. This Arabidopsis thaliana (Mouse-ear cress) protein is Cell division cycle protein 27 homolog B (CDC27B).